A 706-amino-acid polypeptide reads, in one-letter code: Parasporal crystal protein Cry18Aa (706 aa).

This sequence belongs to the delta endotoxin family.

Binds to the brush border membrane vesicles of scarab larvae and somehow damages the gut wall to allow the vegetative cells of P.popilliae to enter the hemolymph. Active on M.melolontha. The sequence is that of Parasporal crystal protein Cry18Aa (cry18Aa) from Paenibacillus popilliae (Bacillus popilliae).